A 328-amino-acid polypeptide reads, in one-letter code: L-tyrosine isonitrile synthase (328 aa).

This sequence belongs to the isocyanide synthase family. Monomer in solution.

It catalyses the reaction D-ribulose 5-phosphate + L-tyrosine = (2S)-3-(4-hydroxyphenyl)-2-isocyanopropanoate + hydroxyacetone + formaldehyde + phosphate + H2O + H(+). Functionally, involved in the biosynthesis of paerucumarin, a cyclized isocyano derivative of tyrosine. Responsible for the synthesis of the isonitrile group on tyrosine using the C2 of ribulose 5-phosphate as the source of the carbon atom. This Pseudomonas aeruginosa (strain ATCC 15692 / DSM 22644 / CIP 104116 / JCM 14847 / LMG 12228 / 1C / PRS 101 / PAO1) protein is L-tyrosine isonitrile synthase.